Consider the following 312-residue polypeptide: tRNA pseudouridine synthase B (312 aa).

Asp46 functions as the Nucleophile in the catalytic mechanism. Positions 74, 177, and 198 each coordinate substrate.

It belongs to the pseudouridine synthase TruB family. Type 1 subfamily.

It catalyses the reaction uridine(55) in tRNA = pseudouridine(55) in tRNA. Functionally, responsible for synthesis of pseudouridine from uracil-55 in the psi GC loop of transfer RNAs. The protein is tRNA pseudouridine synthase B of Buchnera aphidicola subsp. Schizaphis graminum (strain Sg).